A 298-amino-acid chain; its full sequence is Zinc import ATP-binding protein ZnuC (298 aa).

Residues 17–232 (IELRNAGVYR…PEYVRLFGSR (216 aa)) enclose the ABC transporter domain. Position 49–56 (49–56 (GQNGAGKS)) interacts with ATP. A disordered region spans residues 273-298 (RGHCHVEDGHHHDHEHHHHEGGQPRA). Over residues 276–298 (CHVEDGHHHDHEHHHHEGGQPRA) the composition is skewed to basic and acidic residues.

Belongs to the ABC transporter superfamily. Zinc importer (TC 3.A.1.15.5) family. The complex is composed of two ATP-binding proteins (ZnuC), two transmembrane proteins (ZnuB) and a solute-binding protein (ZnuA).

It localises to the cell inner membrane. The catalysed reaction is Zn(2+)(out) + ATP(in) + H2O(in) = Zn(2+)(in) + ADP(in) + phosphate(in) + H(+)(in). Its function is as follows. Part of the ABC transporter complex ZnuABC involved in zinc import. Responsible for energy coupling to the transport system. This Brucella melitensis biotype 1 (strain ATCC 23456 / CCUG 17765 / NCTC 10094 / 16M) protein is Zinc import ATP-binding protein ZnuC.